The primary structure comprises 106 residues: Small ribosomal subunit protein bS18 (106 aa).

Residues 1–39 form a disordered region; it reads MNGRNNDMGRNGGADYDDRDFGRTPDLNADAPGRRRTGR.

The protein belongs to the bacterial ribosomal protein bS18 family. As to quaternary structure, part of the 30S ribosomal subunit. Forms a tight heterodimer with protein bS6.

Functionally, binds as a heterodimer with protein bS6 to the central domain of the 16S rRNA, where it helps stabilize the platform of the 30S subunit. In Sorangium cellulosum (strain So ce56) (Polyangium cellulosum (strain So ce56)), this protein is Small ribosomal subunit protein bS18.